A 520-amino-acid chain; its full sequence is Hydroxymethylglutaryl-CoA synthase, cytoplasmic (520 aa).

A Phosphoserine modification is found at Ser4. Positions 43 and 44 each coordinate (3S)-3-hydroxy-3-methylglutaryl-CoA. 44–46 (AGK) provides a ligand contact to CoA. Lys46 is modified (N6-acetyllysine). The active-site Proton donor/acceptor is Glu95. The (3S)-3-hydroxy-3-methylglutaryl-CoA site is built by Cys129, Asn167, Thr171, Ser221, and His264. Cys129 acts as the Acyl-thioester intermediate in catalysis. Residue Asn167 coordinates CoA. A CoA-binding site is contributed by Ser221. The active-site Proton donor/acceptor is His264. Residues Lys269 and Lys273 each contribute to the CoA site. Lys273, Asn343, and Ser377 together coordinate (3S)-3-hydroxy-3-methylglutaryl-CoA. The residue at position 273 (Lys273) is an N6-acetyllysine. Residues 488 to 520 (TATEHIPSPAKKVPRLPATSAESESAVISNGEH) are disordered. Phosphoserine is present on residues Ser495 and Ser516. Positions 507 to 520 (SAESESAVISNGEH) are enriched in polar residues.

This sequence belongs to the thiolase-like superfamily. HMG-CoA synthase family. Homodimer.

The protein localises to the cytoplasm. It catalyses the reaction acetoacetyl-CoA + acetyl-CoA + H2O = (3S)-3-hydroxy-3-methylglutaryl-CoA + CoA + H(+). The protein operates within metabolic intermediate biosynthesis; (R)-mevalonate biosynthesis; (R)-mevalonate from acetyl-CoA: step 2/3. Its function is as follows. Catalyzes the condensation of acetyl-CoA with acetoacetyl-CoA to form HMG-CoA, which is converted by HMG-CoA reductase (HMGCR) into mevalonate, a precursor for cholesterol synthesis. The protein is Hydroxymethylglutaryl-CoA synthase, cytoplasmic of Mus musculus (Mouse).